The primary structure comprises 382 residues: Na(+)/H(+) antiporter NhaA (382 aa).

Transmembrane regions (helical) follow at residues 11–31, 47–67, 88–108, 116–136, 145–165, 170–190, 261–283, 299–319, 327–347, and 353–373; these read FSVP…LDPA, FHFV…AVEI, LATL…NAII, GWGI…RLVF, FLLL…AVFY, HPTE…AYIL, IVVD…SSVG, LGIF…PQQV, TGLV…VAFV, and GSAK…IMLG.

The protein belongs to the NhaA Na(+)/H(+) (TC 2.A.33) antiporter family.

The protein localises to the cell inner membrane. The catalysed reaction is Na(+)(in) + 2 H(+)(out) = Na(+)(out) + 2 H(+)(in). Its function is as follows. Na(+)/H(+) antiporter that extrudes sodium in exchange for external protons. The protein is Na(+)/H(+) antiporter NhaA of Geobacter sulfurreducens (strain ATCC 51573 / DSM 12127 / PCA).